A 388-amino-acid polypeptide reads, in one-letter code: Staphopain A (388 aa).

A signal peptide spans 1 to 25 (MKRNFPKLIALSLIFSLSVTPIANA). Positions 26 to 214 (ESNSNIKAKD…TSQFKSNNYT (189 aa)) are excised as a propeptide. Catalysis depends on residues Cys238, His334, and Asn355.

This sequence belongs to the peptidase C47 family. In the cytoplasm, prematurely activated/folded ScpA forms a stable non-covalent complex with ScpB. In terms of processing, cleavage leads to the activation of ScpA probably by an auto-catalytic manner.

Its subcellular location is the secreted. The enzyme catalyses Broad endopeptidase action on proteins including elastin, but rather limited hydrolysis of small-molecule substrates. Assays are conveniently made with hemoglobin, casein or Z-Phe-Arg-NHMec as substrate.. Prematurely activated/folded staphopain A is inhibited by staphostatin A (ScpB), which is probably required to protect staphylococcal cytoplasmic proteins from degradation by ScpA. In terms of biological role, cysteine protease that plays an important role in the inhibition of host innate immune response. Cleaves host elastins found in connective tissues, pulmonary surfactant protein A in the lungs, and the chemokine receptor CXCR2 on leukocytes. Proteolytic cleavage of surfactant protein A impairs bacterial phagocytosis by neutrophils while CXCR2 degradation blocks neutrophil activation and chemotaxis. Additionally, promotes vascular leakage by activating the plasma kallikerin/kinin system, resulting in hypotension. This chain is Staphopain A (sspP), found in Staphylococcus aureus (strain COL).